Here is a 103-residue protein sequence, read N- to C-terminus: N(4)-acetylcytidine amidohydrolase (103 aa).

The 96-residue stretch at 6–101 (ITFFQRFQDD…QTQFYVIEFK (96 aa)) folds into the ASCH domain. Lys-21 serves as the catalytic Proton acceptor. Thr-24 acts as the Nucleophile in catalysis. Residue Glu-74 is the Proton donor of the active site.

Belongs to the N(4)-acetylcytidine amidohydrolase family.

The catalysed reaction is N(4)-acetylcytidine + H2O = cytidine + acetate + H(+). It carries out the reaction N(4)-acetyl-2'-deoxycytidine + H2O = 2'-deoxycytidine + acetate + H(+). It catalyses the reaction N(4)-acetylcytosine + H2O = cytosine + acetate + H(+). Catalyzes the hydrolysis of N(4)-acetylcytidine (ac4C). This chain is N(4)-acetylcytidine amidohydrolase (yqfB), found in Escherichia fergusonii (strain ATCC 35469 / DSM 13698 / CCUG 18766 / IAM 14443 / JCM 21226 / LMG 7866 / NBRC 102419 / NCTC 12128 / CDC 0568-73).